A 195-amino-acid chain; its full sequence is MRRASISRQTAETEISVDINLDGTGAYDNQTGVGFFDHMLDQLARHSLIDMTISAKGDYHIDDHHTVEDTGIALGQALSAALGDKRGIRRYGECHLPMDDAQVRCALDLSGRPFLVWNVDLPTAKIGTFDTELVREFFQAFSTHGGITLHVDQLHGLNSHHIAEAAFKAVARALRQAVESDPRKGDAIPSTKGTL.

Belongs to the imidazoleglycerol-phosphate dehydratase family.

It is found in the cytoplasm. The enzyme catalyses D-erythro-1-(imidazol-4-yl)glycerol 3-phosphate = 3-(imidazol-4-yl)-2-oxopropyl phosphate + H2O. The protein operates within amino-acid biosynthesis; L-histidine biosynthesis; L-histidine from 5-phospho-alpha-D-ribose 1-diphosphate: step 6/9. The polypeptide is Imidazoleglycerol-phosphate dehydratase (Ruegeria pomeroyi (strain ATCC 700808 / DSM 15171 / DSS-3) (Silicibacter pomeroyi)).